We begin with the raw amino-acid sequence, 984 residues long: Ephrin type-B receptor 1 (984 aa).

Positions 1–182 (ETLMDTRTAT…FFKKCPSVVQ (182 aa)) constitute an Eph LBD domain. The Extracellular portion of the chain corresponds to 1 to 541 (ETLMDTRTAT…KSELREQLPL (541 aa)). 2 consecutive Fibronectin type-III domains span residues 303–413 (VPSG…TNQA) and 414–528 (APST…TLTD). N-linked (GlcNAc...) asparagine glycosylation is found at N315, N407, and N480. Residues 542–562 (IAGSAAAGVVFIVSLVAISIV) traverse the membrane as a helical segment. Residues 563 to 984 (CSRKRAYSKE…QMSQSPTSMA (422 aa)) are Cytoplasmic-facing. The region spanning 619 to 882 (VKIEEVIGAG…EIVNTLDKMI (264 aa)) is the Protein kinase domain. ATP is bound by residues 625 to 633 (IGAGEFGEV) and K651. D744 serves as the catalytic Proton acceptor. Positions 911-975 (TAFTSVEDWL…LNSIQSMRVQ (65 aa)) constitute an SAM domain. The short motif at 982-984 (SMA) is the PDZ-binding element.

The protein belongs to the protein kinase superfamily. Tyr protein kinase family. Ephrin receptor subfamily. In terms of assembly, heterotetramer upon binding of the ligand. The heterotetramer is composed of an ephrin dimer and a receptor dimer. Oligomerization is probably required to induce biological responses. Phosphorylated. Autophosphorylation is stimulated by ligands. Expressed at high levels in the 10-day embryo, and in adult brain, lung, heart and skeletal muscle. Low levels of expression detected in all other adult tissues tested.

The protein resides in the cell membrane. It localises to the early endosome membrane. It is found in the cell projection. Its subcellular location is the dendrite. The catalysed reaction is L-tyrosyl-[protein] + ATP = O-phospho-L-tyrosyl-[protein] + ADP + H(+). Receptor tyrosine kinase which binds promiscuously transmembrane ephrin-B family ligands residing on adjacent cells, leading to contact-dependent bidirectional signaling into neighboring cells. The signaling pathway downstream of the receptor is referred to as forward signaling while the signaling pathway downstream of the ephrin ligand is referred to as reverse signaling. May play a role in axon guidance during nervous system development. May also play an important redundant role with other ephrin-B receptors in development and maturation of dendritic spines and synapse formation. More generally, may play a role in targeted cell migration and adhesion. Upon activation by ephrin-B ligands activates the MAPK/ERK and the JNK signaling cascades to regulate cell migration and adhesion respectively. The polypeptide is Ephrin type-B receptor 1 (EPHB1) (Gallus gallus (Chicken)).